The following is a 360-amino-acid chain: Chorismate synthase (360 aa).

The disordered stretch occupies residues 36–60; the sequence is LSEDDIQPDLDRRKPGTSKYTTPRR. NADP(+) is bound at residue R48. FMN is bound by residues 125–127, 246–247, G286, 301–305, and R327; these read RSS, NA, and KPTSS.

It belongs to the chorismate synthase family. As to quaternary structure, homotetramer. FMNH2 is required as a cofactor.

The catalysed reaction is 5-O-(1-carboxyvinyl)-3-phosphoshikimate = chorismate + phosphate. The protein operates within metabolic intermediate biosynthesis; chorismate biosynthesis; chorismate from D-erythrose 4-phosphate and phosphoenolpyruvate: step 7/7. Functionally, catalyzes the anti-1,4-elimination of the C-3 phosphate and the C-6 proR hydrogen from 5-enolpyruvylshikimate-3-phosphate (EPSP) to yield chorismate, which is the branch point compound that serves as the starting substrate for the three terminal pathways of aromatic amino acid biosynthesis. This reaction introduces a second double bond into the aromatic ring system. This chain is Chorismate synthase, found in Histophilus somni (strain 129Pt) (Haemophilus somnus).